A 208-amino-acid polypeptide reads, in one-letter code: Small ribosomal subunit protein uS4 (208 aa).

Positions 95–157 (RRIDNIVYRA…DSLKKLIRSN (63 aa)) constitute an S4 RNA-binding domain.

This sequence belongs to the universal ribosomal protein uS4 family. As to quaternary structure, part of the 30S ribosomal subunit. Contacts protein S5. The interaction surface between S4 and S5 is involved in control of translational fidelity.

In terms of biological role, one of the primary rRNA binding proteins, it binds directly to 16S rRNA where it nucleates assembly of the body of the 30S subunit. With S5 and S12 plays an important role in translational accuracy. The sequence is that of Small ribosomal subunit protein uS4 from Borrelia garinii subsp. bavariensis (strain ATCC BAA-2496 / DSM 23469 / PBi) (Borreliella bavariensis).